The following is a 265-amino-acid chain: MLRVAGRRLSSSAARSSSTFFTRSSFTVTDDSSPARSPSPSLTSSFLDQIRGFSSNSVSPAHQLGLVSDLPATVAAIKNPSSKIVYDDSNHERYPPGDPSKRAFAYFVLTGGRFVYASSVRLLILKFVLSMSASKDVLALASLEVDLSSIEPGSTVTVKWRGKPVFIRRRTDDDIKLANSVDLGTLRDPQQDAERVKNPEWLVVVGVCTHLGCIPLPNAGDFGGWFCPCHGSHYDISGRIRKGPAPYNLEVPTYSFLEENKLLIG.

A mitochondrion-targeting transit peptide spans 1–53 (MLRVAGRRLSSSAARSSSTFFTRSSFTVTDDSSPARSPSPSLTSSFLDQIRGF). Residues 54–102 (SSNSVSPAHQLGLVSDLPATVAAIKNPSSKIVYDDSNHERYPPGDPSKR) lie on the Mitochondrial matrix side of the membrane. A helical transmembrane segment spans residues 103 to 125 (AFAYFVLTGGRFVYASSVRLLIL). Residues 126-265 (KFVLSMSASK…FLEENKLLIG (140 aa)) are Mitochondrial intermembrane-facing. Residues 175–263 (IKLANSVDLG…YSFLEENKLL (89 aa)) enclose the Rieske domain. Residues C208, H210, C227, and H230 each contribute to the [2Fe-2S] cluster site. C213 and C229 are oxidised to a cystine.

Belongs to the Rieske iron-sulfur protein family. In terms of assembly, component of the ubiquinol-cytochrome c oxidoreductase (cytochrome b-c1 complex, complex III, CIII), a multisubunit enzyme composed of 3 respiratory subunits cytochrome b, cytochrome c1 and Rieske protein, 2 core protein subunits, and several low-molecular weight protein subunits. The complex exists as an obligatory dimer and forms supercomplexes (SCs) in the inner mitochondrial membrane with cytochrome c oxidase (complex IV, CIV). [2Fe-2S] cluster serves as cofactor.

The protein resides in the mitochondrion inner membrane. It carries out the reaction a quinol + 2 Fe(III)-[cytochrome c](out) = a quinone + 2 Fe(II)-[cytochrome c](out) + 2 H(+)(out). Its function is as follows. Component of the ubiquinol-cytochrome c oxidoreductase, a multisubunit transmembrane complex that is part of the mitochondrial electron transport chain which drives oxidative phosphorylation. The respiratory chain contains 3 multisubunit complexes succinate dehydrogenase (complex II, CII), ubiquinol-cytochrome c oxidoreductase (cytochrome b-c1 complex, complex III, CIII) and cytochrome c oxidase (complex IV, CIV), that cooperate to transfer electrons derived from NADH and succinate to molecular oxygen, creating an electrochemical gradient over the inner membrane that drives transmembrane transport and the ATP synthase. The cytochrome b-c1 complex catalyzes electron transfer from ubiquinol to cytochrome c, linking this redox reaction to translocation of protons across the mitochondrial inner membrane, with protons being carried across the membrane as hydrogens on the quinol. In the process called Q cycle, 2 protons are consumed from the matrix, 4 protons are released into the intermembrane space and 2 electrons are passed to cytochrome c. The Rieske protein is a catalytic core subunit containing a [2Fe-2S] iron-sulfur cluster. It cycles between 2 conformational states during catalysis to transfer electrons from the quinol bound in the Q(0) site in cytochrome b to cytochrome c1. This is Cytochrome b-c1 complex subunit Rieske, mitochondrial (FES1) from Solanum tuberosum (Potato).